Here is a 482-residue protein sequence, read N- to C-terminus: Proline--tRNA ligase (482 aa).

Belongs to the class-II aminoacyl-tRNA synthetase family. ProS type 3 subfamily. In terms of assembly, homodimer.

It localises to the cytoplasm. The enzyme catalyses tRNA(Pro) + L-proline + ATP = L-prolyl-tRNA(Pro) + AMP + diphosphate. Catalyzes the attachment of proline to tRNA(Pro) in a two-step reaction: proline is first activated by ATP to form Pro-AMP and then transferred to the acceptor end of tRNA(Pro). This chain is Proline--tRNA ligase, found in Thermofilum pendens (strain DSM 2475 / Hrk 5).